The primary structure comprises 396 residues: Metallophosphoesterase 1 (396 aa).

A helical transmembrane segment spans residues 27 to 47; the sequence is IAVVFAVLLFCEFLIYYLAIF. Positions 77, 119, 157, 249, 303, and 305 each coordinate a divalent metal cation. Residues 356–376 form a helical membrane-spanning segment; that stretch reads VVLVIYCGAVGFLVVLTLSHL. The short motif at 392–396 is the Di-lysine motif element; sequence KRKTR.

Belongs to the metallophosphoesterase superfamily. MPPE1 family. As to quaternary structure, interacts with GPI-anchor proteins (via the GPI portion). Interacts with TMED10. Requires Mn(2+) as cofactor.

The protein resides in the endoplasmic reticulum-Golgi intermediate compartment membrane. In terms of biological role, metallophosphoesterase that catalyzes the removal of a side-chain ethanolamine-phosphate (EtNP) from the second mannose of the GPI-anchor protein intermediate. Participates in the glycan remodeling steps of GPI-anchor maturation to allow an efficient transport of GPI-anchor proteins from the endoplasmic reticulum to the Golgi. This chain is Metallophosphoesterase 1, found in Macaca fascicularis (Crab-eating macaque).